The primary structure comprises 128 residues: MRTPAQFLGILLLWFPGIKCDIKMTQSPSSMYASLGERVTISCKASQDINSYLTWFQQKPGKSPKTLLYRANRLVDGVPSRFSGSGSGQDFSLTISSLEYEDMGIYYCLQYDEFPLTFGAGTKLELKR.

The N-terminal stretch at 1 to 20 (MRTPAQFLGILLLWFPGIKC) is a signal peptide. Residues 21–43 (DIKMTQSPSSMYASLGERVTISC) are framework-1. The cysteines at positions 43 and 108 are disulfide-linked. Positions 44–54 (KASQDINSYLT) are complementarity-determining-1. Positions 55-69 (WFQQKPGKSPKTLLY) are framework-2. A complementarity-determining-2 region spans residues 70–76 (RANRLVD). The tract at residues 77 to 108 (GVPSRFSGSGSGQDFSLTISSLEYEDMGIYYC) is framework-3. The interval 109–117 (LQYDEFPLT) is complementarity-determining-3. The interval 118–127 (FGAGTKLELK) is framework-4.

This chain is Ig kappa chain V-V region T1, found in Mus musculus (Mouse).